We begin with the raw amino-acid sequence, 110 residues long: Nucleoid-associated protein Mvan_5528 (110 aa).

It belongs to the YbaB/EbfC family. Homodimer.

It is found in the cytoplasm. Its subcellular location is the nucleoid. Its function is as follows. Binds to DNA and alters its conformation. May be involved in regulation of gene expression, nucleoid organization and DNA protection. The polypeptide is Nucleoid-associated protein Mvan_5528 (Mycolicibacterium vanbaalenii (strain DSM 7251 / JCM 13017 / BCRC 16820 / KCTC 9966 / NRRL B-24157 / PYR-1) (Mycobacterium vanbaalenii)).